Reading from the N-terminus, the 369-residue chain is Anhydro-N-acetylmuramic acid kinase (369 aa).

12 to 19 (GTSMDGID) is an ATP binding site.

It belongs to the anhydro-N-acetylmuramic acid kinase family.

The enzyme catalyses 1,6-anhydro-N-acetyl-beta-muramate + ATP + H2O = N-acetyl-D-muramate 6-phosphate + ADP + H(+). The protein operates within amino-sugar metabolism; 1,6-anhydro-N-acetylmuramate degradation. It functions in the pathway cell wall biogenesis; peptidoglycan recycling. In terms of biological role, catalyzes the specific phosphorylation of 1,6-anhydro-N-acetylmuramic acid (anhMurNAc) with the simultaneous cleavage of the 1,6-anhydro ring, generating MurNAc-6-P. Is required for the utilization of anhMurNAc either imported from the medium or derived from its own cell wall murein, and thus plays a role in cell wall recycling. The sequence is that of Anhydro-N-acetylmuramic acid kinase from Shewanella sediminis (strain HAW-EB3).